The following is a 196-amino-acid chain: Regulator of G-protein signaling 1 (196 aa).

A disordered region spans residues 1 to 27; sequence MPGMFFSANPKDLKGTDQSLLDDKTQK. Positions 11 to 25 are enriched in basic and acidic residues; sequence KDLKGTDQSLLDDKT. The RGS domain occupies 72–187; the sequence is SLEKLLANQT…LKSNIYLNLL (116 aa).

Interacts with GNAI1 and GNAQ.

The protein resides in the cell membrane. It is found in the cytoplasm. The protein localises to the cytosol. In terms of biological role, regulates G protein-coupled receptor signaling cascades, including signaling downstream of the N-formylpeptide chemoattractant receptors and leukotriene receptors. Inhibits B cell chemotaxis toward CXCL12. Inhibits signal transduction by increasing the GTPase activity of G protein alpha subunits, thereby driving them into their inactive GDP-bound form. The polypeptide is Regulator of G-protein signaling 1 (RGS1) (Equus caballus (Horse)).